Consider the following 38-residue polypeptide: Defensin D7 (38 aa).

Belongs to the DEFL family. Group IV subfamily. As to expression, distributed in the epidermal cell layer of leaves and in the subepidermal layer region of stems. Not in roots.

It is found in the secreted. It localises to the cell wall. Antimicrobial peptide. Active against Fusarium spp., Gram-positive and Gram-negative bacterial pathogens. This is Defensin D7 from Spinacia oleracea (Spinach).